Reading from the N-terminus, the 146-residue chain is Ferredoxin-thioredoxin reductase catalytic chain, chloroplastic (146 aa).

A chloroplast-targeting transit peptide spans 1–26 (MMSMASTTASPFCPSPMPRGRKCTVR). Cysteine 85 contributes to the [4Fe-4S] cluster binding site. Residue cysteine 87 is the Nucleophile of the active site. An intrachain disulfide couples cysteine 87 to cysteine 117. Cysteine 104, cysteine 106, and cysteine 115 together coordinate [4Fe-4S] cluster.

This sequence belongs to the ferredoxin thioredoxin reductase beta subunit family. In terms of assembly, heterodimer of subunit A (variable subunit) and subunit B (catalytic subunit). Heterodimeric FTR forms a complex with ferredoxin and thioredoxin. [4Fe-4S] cluster serves as cofactor.

It is found in the plastid. It localises to the chloroplast. It carries out the reaction [thioredoxin]-disulfide + 2 reduced [2Fe-2S]-[ferredoxin] + 2 H(+) = [thioredoxin]-dithiol + 2 oxidized [2Fe-2S]-[ferredoxin]. Functionally, catalytic subunit of the ferredoxin-thioredoxin reductase (FTR), which catalyzes the two-electron reduction of thioredoxins by the electrons provided by reduced ferredoxin. The sequence is that of Ferredoxin-thioredoxin reductase catalytic chain, chloroplastic from Oryza sativa subsp. japonica (Rice).